The primary structure comprises 108 residues: U-scoloptoxin(10)-Sm1a (108 aa).

The N-terminal stretch at 1 to 24 is a signal peptide; sequence MNKQWLHFFSVLLLCYVIEETCSL.

Belongs to the scoloptoxin-10 family. Post-translationally, contains 3 disulfide bonds. As to expression, expressed by the venom gland.

The protein resides in the secreted. This chain is U-scoloptoxin(10)-Sm1a, found in Scolopendra morsitans (Tanzanian blue ringleg centipede).